Here is a 981-residue protein sequence, read N- to C-terminus: uncharacterized protein (981 aa).

Positions 535–612 (VLLNPVAIEI…SIASIIQKKS (78 aa)) constitute a Carrier domain. Residue Ser571 is modified to O-(pantetheine 4'-phosphoryl)serine.

This sequence belongs to the ATP-dependent AMP-binding enzyme family.

This is an uncharacterized protein from Schizosaccharomyces pombe (strain 972 / ATCC 24843) (Fission yeast).